An 883-amino-acid chain; its full sequence is Phosphoenolpyruvate carboxylase (883 aa).

Catalysis depends on residues His138 and Lys546.

The protein belongs to the PEPCase type 1 family. It depends on Mg(2+) as a cofactor.

It carries out the reaction oxaloacetate + phosphate = phosphoenolpyruvate + hydrogencarbonate. In terms of biological role, forms oxaloacetate, a four-carbon dicarboxylic acid source for the tricarboxylic acid cycle. This is Phosphoenolpyruvate carboxylase from Escherichia coli (strain 55989 / EAEC).